A 606-amino-acid polypeptide reads, in one-letter code: Elongation factor 4 (606 aa).

Positions Glu10–Lys192 constitute a tr-type G domain. GTP-binding positions include Asp22–Thr27 and Asn139–Asp142.

Belongs to the TRAFAC class translation factor GTPase superfamily. Classic translation factor GTPase family. LepA subfamily.

Its subcellular location is the cell membrane. The catalysed reaction is GTP + H2O = GDP + phosphate + H(+). Its function is as follows. Required for accurate and efficient protein synthesis under certain stress conditions. May act as a fidelity factor of the translation reaction, by catalyzing a one-codon backward translocation of tRNAs on improperly translocated ribosomes. Back-translocation proceeds from a post-translocation (POST) complex to a pre-translocation (PRE) complex, thus giving elongation factor G a second chance to translocate the tRNAs correctly. Binds to ribosomes in a GTP-dependent manner. This Lawsonia intracellularis (strain PHE/MN1-00) protein is Elongation factor 4.